Consider the following 60-residue polypeptide: Cytotoxin SP15d (60 aa).

Disulfide bonds link cysteine 3–cysteine 21, cysteine 14–cysteine 38, cysteine 42–cysteine 53, and cysteine 54–cysteine 59.

Belongs to the three-finger toxin family. Short-chain subfamily. Type IA cytotoxin sub-subfamily. Monomer in solution; Homodimer and oligomer in the presence of negatively charged lipids forming a pore with a size ranging between 20 and 30 Angstroms. As to expression, expressed by the venom gland.

It localises to the secreted. Its subcellular location is the target cell membrane. Functionally, shows cytolytic activity on many different cells by forming pore in lipid membranes. In vivo, increases heart rate or kills the animal by cardiac arrest. In addition, it binds to heparin with high affinity, interacts with Kv channel-interacting protein 1 (KCNIP1) in a calcium-independent manner, and binds to integrin alpha-V/beta-3 (ITGAV/ITGB3) with moderate affinity. This is Cytotoxin SP15d from Naja atra (Chinese cobra).